We begin with the raw amino-acid sequence, 167 residues long: Crossover junction endodeoxyribonuclease RuvC (167 aa).

Catalysis depends on residues aspartate 7, glutamate 67, and aspartate 140. Mg(2+) is bound by residues aspartate 7, glutamate 67, and aspartate 140.

The protein belongs to the RuvC family. Homodimer which binds Holliday junction (HJ) DNA. The HJ becomes 2-fold symmetrical on binding to RuvC with unstacked arms; it has a different conformation from HJ DNA in complex with RuvA. In the full resolvosome a probable DNA-RuvA(4)-RuvB(12)-RuvC(2) complex forms which resolves the HJ. Mg(2+) serves as cofactor.

The protein localises to the cytoplasm. The catalysed reaction is Endonucleolytic cleavage at a junction such as a reciprocal single-stranded crossover between two homologous DNA duplexes (Holliday junction).. Functionally, the RuvA-RuvB-RuvC complex processes Holliday junction (HJ) DNA during genetic recombination and DNA repair. Endonuclease that resolves HJ intermediates. Cleaves cruciform DNA by making single-stranded nicks across the HJ at symmetrical positions within the homologous arms, yielding a 5'-phosphate and a 3'-hydroxyl group; requires a central core of homology in the junction. The consensus cleavage sequence is 5'-(A/T)TT(C/G)-3'. Cleavage occurs on the 3'-side of the TT dinucleotide at the point of strand exchange. HJ branch migration catalyzed by RuvA-RuvB allows RuvC to scan DNA until it finds its consensus sequence, where it cleaves and resolves the cruciform DNA. This is Crossover junction endodeoxyribonuclease RuvC from Moorella thermoacetica (strain ATCC 39073 / JCM 9320).